The following is a 399-amino-acid chain: Tryptophan synthase beta chain (399 aa).

An N6-(pyridoxal phosphate)lysine modification is found at K92.

The protein belongs to the TrpB family. In terms of assembly, tetramer of two alpha and two beta chains. Pyridoxal 5'-phosphate serves as cofactor.

It carries out the reaction (1S,2R)-1-C-(indol-3-yl)glycerol 3-phosphate + L-serine = D-glyceraldehyde 3-phosphate + L-tryptophan + H2O. The protein operates within amino-acid biosynthesis; L-tryptophan biosynthesis; L-tryptophan from chorismate: step 5/5. The beta subunit is responsible for the synthesis of L-tryptophan from indole and L-serine. The chain is Tryptophan synthase beta chain from Oceanobacillus iheyensis (strain DSM 14371 / CIP 107618 / JCM 11309 / KCTC 3954 / HTE831).